A 39-amino-acid chain; its full sequence is Cytochrome b559 subunit beta (39 aa).

The chain crosses the membrane as a helical span at residues 14-30 (WLAVHGLAVPTVFFLGA). His-18 is a heme binding site.

It belongs to the PsbE/PsbF family. As to quaternary structure, heterodimer of an alpha subunit and a beta subunit. PSII is composed of 1 copy each of membrane proteins PsbA, PsbB, PsbC, PsbD, PsbE, PsbF, PsbH, PsbI, PsbJ, PsbK, PsbL, PsbM, PsbT, PsbX, PsbY, PsbZ, Psb30/Ycf12, at least 3 peripheral proteins of the oxygen-evolving complex and a large number of cofactors. It forms dimeric complexes. Requires heme b as cofactor.

The protein resides in the plastid. The protein localises to the chloroplast thylakoid membrane. Functionally, this b-type cytochrome is tightly associated with the reaction center of photosystem II (PSII). PSII is a light-driven water:plastoquinone oxidoreductase that uses light energy to abstract electrons from H(2)O, generating O(2) and a proton gradient subsequently used for ATP formation. It consists of a core antenna complex that captures photons, and an electron transfer chain that converts photonic excitation into a charge separation. The polypeptide is Cytochrome b559 subunit beta (Physcomitrium patens (Spreading-leaved earth moss)).